A 207-amino-acid polypeptide reads, in one-letter code: Large ribosomal subunit protein uL4 (207 aa).

The segment at 58-78 (AGGGKKPWRQKGTGRARHGSI) is disordered. A compositionally biased stretch (basic residues) spans 63-77 (KPWRQKGTGRARHGS).

Belongs to the universal ribosomal protein uL4 family. In terms of assembly, part of the 50S ribosomal subunit.

Its function is as follows. One of the primary rRNA binding proteins, this protein initially binds near the 5'-end of the 23S rRNA. It is important during the early stages of 50S assembly. It makes multiple contacts with different domains of the 23S rRNA in the assembled 50S subunit and ribosome. Forms part of the polypeptide exit tunnel. This is Large ribosomal subunit protein uL4 from Aster yellows witches'-broom phytoplasma (strain AYWB).